A 370-amino-acid chain; its full sequence is 2-aminoethylphosphonate--pyruvate transaminase (370 aa).

N6-(pyridoxal phosphate)lysine is present on Lys194.

This sequence belongs to the class-V pyridoxal-phosphate-dependent aminotransferase family. PhnW subfamily. In terms of assembly, homodimer. The cofactor is pyridoxal 5'-phosphate.

The enzyme catalyses (2-aminoethyl)phosphonate + pyruvate = phosphonoacetaldehyde + L-alanine. Involved in phosphonate degradation. The sequence is that of 2-aminoethylphosphonate--pyruvate transaminase from Paraburkholderia phymatum (strain DSM 17167 / CIP 108236 / LMG 21445 / STM815) (Burkholderia phymatum).